A 175-amino-acid chain; its full sequence is Short chain dehydrogenase/reductase dpmpG (175 aa).

NADP(+) is bound by residues I18, D71, N98, and K132.

This sequence belongs to the short-chain dehydrogenases/reductases (SDR) family.

Its pathway is secondary metabolite biosynthesis; terpenoid biosynthesis. Functionally, short chain dehydrogenase/reductase; part of the gene cluster that mediates the biosynthesis of diterpenoid pyrones. The first step of the pathway is the synthesis of the alpha-pyrone moiety by the polyketide synthase dpmpA via condensation of one acetyl-CoA starter unit with 3 malonyl-CoA units and 2 methylations. The alpha-pyrone is then combined with geranylgeranyl pyrophosphate (GGPP) formed by the GGPP synthase dpmpD through the action of the prenyltransferase dpmpC to yield a linear alpha-pyrone diterpenoid. Subsequent steps in the diterpenoid pyrone biosynthetic pathway involve the decalin core formation, which is initiated by the epoxidation of the C10-C11 olefin by the FAD-dependent oxidoreductase dpmpE, and is followed by a cyclization cascade catalyzed by the terpene cyclase dpmpB. The short chain dehydrogenase/reductase dpmpG then oxidizes the 8S hydroxy group to a ketone and the short chain dehydrogenase/reductase dpmpH reduces the ketone to the 8R hydroxy group to yield higginsianin B. Higginsianin B is further methylated by the methyltransferase dpmpI to produce the intermediate named FDDP B. The cytochrome P450 monooxygenase dpmpJ then oxidizes the C-26 methyl to primary alcohol, producing the final diterpenoid pyrone with a C-26 primary alcohol on the gamma-pyrone moiety named FDDP C. This chain is Short chain dehydrogenase/reductase dpmpG, found in Macrophomina phaseolina (strain MS6) (Charcoal rot fungus).